We begin with the raw amino-acid sequence, 479 residues long: DNA polymerase IV (479 aa).

The UmuC domain occupies 7–189 (ILHLDMDAFF…MTVRTLPGVG (183 aa)). 2 residues coordinate Mg(2+): aspartate 11 and aspartate 105. Residue glutamate 106 is part of the active site. Disordered regions lie at residues 357 to 400 (AGDR…GHGW) and 430 to 479 (DPEL…TSRP). A compositionally biased stretch (basic and acidic residues) spans 381-396 (AERRWPSGHDVRHTEL).

Belongs to the DNA polymerase type-Y family. As to quaternary structure, monomer. Mg(2+) is required as a cofactor.

Its subcellular location is the cytoplasm. It carries out the reaction DNA(n) + a 2'-deoxyribonucleoside 5'-triphosphate = DNA(n+1) + diphosphate. Its function is as follows. Poorly processive, error-prone DNA polymerase involved in untargeted mutagenesis. Copies undamaged DNA at stalled replication forks, which arise in vivo from mismatched or misaligned primer ends. These misaligned primers can be extended by PolIV. Exhibits no 3'-5' exonuclease (proofreading) activity. May be involved in translesional synthesis, in conjunction with the beta clamp from PolIII. The sequence is that of DNA polymerase IV from Streptomyces coelicolor (strain ATCC BAA-471 / A3(2) / M145).